The sequence spans 437 residues: Ribosomal protein uS12 methylthiotransferase RimO (437 aa).

The 111-residue stretch at 4 to 114 (PRVSFVSLGC…VMNAVHEVAP (111 aa)) folds into the MTTase N-terminal domain. 6 residues coordinate [4Fe-4S] cluster: C13, C49, C78, C145, C149, and C152. Positions 131–369 (LTPRHYAYLK…MAKQQQISTN (239 aa)) constitute a Radical SAM core domain. The 66-residue stretch at 372 to 437 (KKKVGKRLPV…DAYDLHGTAV (66 aa)) folds into the TRAM domain.

The protein belongs to the methylthiotransferase family. RimO subfamily. [4Fe-4S] cluster is required as a cofactor.

It localises to the cytoplasm. The catalysed reaction is L-aspartate(89)-[ribosomal protein uS12]-hydrogen + (sulfur carrier)-SH + AH2 + 2 S-adenosyl-L-methionine = 3-methylsulfanyl-L-aspartate(89)-[ribosomal protein uS12]-hydrogen + (sulfur carrier)-H + 5'-deoxyadenosine + L-methionine + A + S-adenosyl-L-homocysteine + 2 H(+). In terms of biological role, catalyzes the methylthiolation of an aspartic acid residue of ribosomal protein uS12. The sequence is that of Ribosomal protein uS12 methylthiotransferase RimO from Brucella abortus (strain S19).